The sequence spans 342 residues: Phosphoribosylformylglycinamidine cyclo-ligase (342 aa).

It belongs to the AIR synthase family.

Its subcellular location is the cytoplasm. The enzyme catalyses 2-formamido-N(1)-(5-O-phospho-beta-D-ribosyl)acetamidine + ATP = 5-amino-1-(5-phospho-beta-D-ribosyl)imidazole + ADP + phosphate + H(+). It functions in the pathway purine metabolism; IMP biosynthesis via de novo pathway; 5-amino-1-(5-phospho-D-ribosyl)imidazole from N(2)-formyl-N(1)-(5-phospho-D-ribosyl)glycinamide: step 2/2. This is Phosphoribosylformylglycinamidine cyclo-ligase from Staphylococcus aureus (strain Mu3 / ATCC 700698).